We begin with the raw amino-acid sequence, 1710 residues long: Neurexin-2 (1710 aa).

The signal sequence occupies residues methionine 1–glycine 28. The Laminin G-like 1 domain occupies leucine 29–cysteine 206. Over leucine 29 to threonine 1634 the chain is Extracellular. Asparagine 60 carries N-linked (GlcNAc...) asparagine glycosylation. Positions alanine 202–serine 242 constitute an EGF-like 1 domain. 3 disulfide bridges follow: cysteine 206/cysteine 219, cysteine 213/cysteine 229, and cysteine 231/cysteine 241. Laminin G-like domains are found at residues valine 289–cysteine 486 and aspartate 493–cysteine 686. Aspartate 335 is a binding site for Ca(2+). Asparagine 338 carries an N-linked (GlcNAc...) asparagine glycan. Leucine 352 and methionine 420 together coordinate Ca(2+). Disulfide bonds link cysteine 450–cysteine 486, cysteine 657–cysteine 686, cysteine 694–cysteine 705, cysteine 699–cysteine 714, and cysteine 716–cysteine 726. An EGF-like 2 domain is found at threonine 690–glutamate 727. 2 consecutive Laminin G-like domains span residues valine 732–cysteine 904 and aspartate 918–cysteine 1093. Residues aspartate 779 and leucine 796 each contribute to the Ca(2+) site. N-linked (GlcNAc...) asparagine glycosylation is present at asparagine 841. Position 854 (arginine 854) interacts with Ca(2+). 4 disulfides stabilise this stretch: cysteine 1065–cysteine 1093, cysteine 1100–cysteine 1111, cysteine 1105–cysteine 1120, and cysteine 1122–cysteine 1132. Residues proline 1096–asparagine 1133 form the EGF-like 3 domain. The region spanning threonine 1137 to serine 1345 is the Laminin G-like 6 domain. Positions 1189, 1206, 1288, and 1290 each coordinate Ca(2+). A glycan (O-linked (Xyl...) (heparan sulfate) serine) is linked at serine 1400. Disordered stretches follow at residues alanine 1458–threonine 1508 and glutamate 1587–proline 1621. A helical transmembrane segment spans residues glycine 1635 to methionine 1655. The Cytoplasmic segment spans residues tyrosine 1656–valine 1710. A disordered region spans residues asparagine 1677 to valine 1710.

The laminin G-like domain 1 binds to NXPH1. Interacts with PATJ. Interacts with CBLN1, CBLN2 and, less avidly, with CBLN4. Specific isoforms bind neuroligins NLGN1, NLGN2 and NLGN3. Specific isoforms bind to alpha-dystroglycan. Interacts (via Laminin G-like 1 domain) with IGSF21 (Ig-like 1 domain) in a trans-interaction manner. Interacts with CLSTN3. In terms of processing, O-glycosylated; contains heparan sulfate. Heparan sulfate attachment is required for synapse development by mediating interactions with neuroligins.

The protein resides in the presynaptic cell membrane. Functionally, neuronal cell surface protein that may be involved in cell recognition and cell adhesion. May mediate intracellular signaling. The chain is Neurexin-2 from Mus musculus (Mouse).